The following is a 268-amino-acid chain: Small ribosomal subunit protein eS1 (268 aa).

The segment at M1–V21 is disordered.

Belongs to the eukaryotic ribosomal protein eS1 family. In terms of assembly, component of the small ribosomal subunit. Mature ribosomes consist of a small (40S) and a large (60S) subunit. The 40S subunit contains about 33 different proteins and 1 molecule of RNA (18S). The 60S subunit contains about 49 different proteins and 3 molecules of RNA (28S, 5.8S and 5S).

The protein resides in the cytoplasm. In terms of biological role, essential for oogenesis; required for late follicle cell development. This chain is Small ribosomal subunit protein eS1, found in Drosophila willistoni (Fruit fly).